Reading from the N-terminus, the 235-residue chain is Uridylate kinase (235 aa).

9–12 (KLSG) contributes to the ATP binding site. A UMP-binding site is contributed by G51. The ATP site is built by G52 and R56. UMP contacts are provided by residues D71 and 132 to 139 (TGNPYFTT). 3 residues coordinate ATP: T159, Y165, and D168.

Belongs to the UMP kinase family. Homohexamer.

The protein resides in the cytoplasm. It carries out the reaction UMP + ATP = UDP + ADP. It functions in the pathway pyrimidine metabolism; CTP biosynthesis via de novo pathway; UDP from UMP (UMPK route): step 1/1. Inhibited by UTP. Functionally, catalyzes the reversible phosphorylation of UMP to UDP. The polypeptide is Uridylate kinase (Christiangramia forsetii (strain DSM 17595 / CGMCC 1.15422 / KT0803) (Gramella forsetii)).